The following is a 316-amino-acid chain: Ribosomal RNA small subunit methyltransferase H (316 aa).

Residues 35–37, Asp-55, Phe-84, Asp-105, and Gln-112 each bind S-adenosyl-L-methionine; that span reads AGH.

This sequence belongs to the methyltransferase superfamily. RsmH family.

It is found in the cytoplasm. The catalysed reaction is cytidine(1402) in 16S rRNA + S-adenosyl-L-methionine = N(4)-methylcytidine(1402) in 16S rRNA + S-adenosyl-L-homocysteine + H(+). Its function is as follows. Specifically methylates the N4 position of cytidine in position 1402 (C1402) of 16S rRNA. This chain is Ribosomal RNA small subunit methyltransferase H, found in Streptococcus suis (strain 05ZYH33).